The primary structure comprises 273 residues: Outer surface protein A (273 aa).

The signal sequence occupies residues 1–16; sequence MKKYLLGIGLILALIA. Cys17 carries N-palmitoyl cysteine lipidation. Residue Cys17 is the site of S-diacylglycerol cysteine attachment.

Belongs to the OspA lipoprotein family.

The protein resides in the cell outer membrane. The protein localises to the cell surface. Induces host (human and mouse) cytokine release by monocyte cell lines via TLR2 and CD14; nonlipidated protein does not stimulate host cells. This chain is Outer surface protein A, found in Borreliella burgdorferi (strain ATCC 35210 / DSM 4680 / CIP 102532 / B31) (Borrelia burgdorferi).